We begin with the raw amino-acid sequence, 298 residues long: MATH domain and coiled-coil domain-containing protein At3g58280 (298 aa).

An MATH domain is found at 9-128 (KKTFGWVIKD…NGEITIIAEV (120 aa)). Residues 240–288 (NLDWLRQKFDQALEKQIAYDTRIGELEKQVKKRKLAVTELEADLEKEKA) adopt a coiled-coil conformation.

The protein is MATH domain and coiled-coil domain-containing protein At3g58280 of Arabidopsis thaliana (Mouse-ear cress).